Here is a 1434-residue protein sequence, read N- to C-terminus: Probable ATP-dependent RNA helicase spindle-E (1434 aa).

The tract at residues 66–86 is disordered; the sequence is VGGPSNTKRTKTLDELESDDD. Residues 127 to 294 enclose the Helicase ATP-binding domain; that stretch reads MKAIKENPVV…FASCKSMPPV (168 aa). 140–147 contacts ATP; that stretch reads GETGCGKT. Residues 240–243 carry the DEAH box motif; it reads DEVH. Positions 354–526 constitute a Helicase C-terminal domain; the sequence is QSEQSYEEAK…SSVLKAKELD (173 aa). The 64-residue stretch at 938–1001 folds into the Tudor domain; sequence ASAITKGLQL…RLMRHELRRD (64 aa).

It belongs to the DEAD box helicase family. DEAH subfamily.

It localises to the cytoplasm. The enzyme catalyses ATP + H2O = ADP + phosphate + H(+). Its function is as follows. Probable ATP-binding RNA helicase which plays a central role during spermatogenesis and oogenesis by repressing transposable elements and preventing their mobilization, which is essential for the germline integrity. Acts via the piRNA metabolic process, which mediates the repression of transposable elements during meiosis by forming complexes composed of piRNAs and Piwi and govern the methylation and subsequent repression of transposons. Involved in the repression of LTR retrotransposon copia. Also involved in telomere regulation by repressing specialized telomeric retroelements HeT-A, TAHRE, and TART; Drosophila telomeres being maintained by transposition of specialized telomeric retroelements. Involved in telomeric trans-silencing, a repression mechanism by which a transposon or a transgene inserted in subtelomeric heterochromatin has the capacity to repress in trans in the female germline, a homologous transposon, or transgene located in euchromatin. Involved in the repression of testis-expressed Stellate genes by the homologous Su(Ste) repeats. Required for anteroposterior and dorsoventral axis formation during oogenesis. The polypeptide is Probable ATP-dependent RNA helicase spindle-E (spn-E) (Drosophila grimshawi (Hawaiian fruit fly)).